Here is a 170-residue protein sequence, read N- to C-terminus: Acetyl-CoA decarbonylase/synthase complex subunit epsilon 1 (170 aa).

The protein belongs to the CdhB family. In terms of assembly, heterotetramer of two alpha and two epsilon subunits. The ACDS complex is made up of alpha, epsilon, beta, gamma and delta subunits with a probable stoichiometry of (alpha(2)epsilon(2))(4)-beta(8)-(gamma(1)delta(1))(8).

It functions in the pathway one-carbon metabolism; methanogenesis from acetate. Part of a complex that catalyzes the reversible cleavage of acetyl-CoA, allowing growth on acetate as sole source of carbon and energy. The alpha-epsilon subcomponent functions as a carbon monoxide dehydrogenase. The precise role of the epsilon subunit is unclear; it may have a stabilizing role within the alpha(2)epsilon(2) component and/or be involved in electron transfer to FAD during a potential FAD-mediated CO oxidation. The chain is Acetyl-CoA decarbonylase/synthase complex subunit epsilon 1 (cdhB1) from Methanosarcina mazei (strain ATCC BAA-159 / DSM 3647 / Goe1 / Go1 / JCM 11833 / OCM 88) (Methanosarcina frisia).